Here is a 320-residue protein sequence, read N- to C-terminus: Nodulation efficiency protein NfeD (320 aa).

Belongs to the ornithine cyclodeaminase/mu-crystallin family.

Seems to be involved in the nodulation efficiency of R.meliloti GR4 on alfalfa roots. The chain is Nodulation efficiency protein NfeD from Rhizobium meliloti (Ensifer meliloti).